The sequence spans 552 residues: Esterase E4 (552 aa).

Positions 1 to 23 (MKNTCGILLNLFLFIGCFLTCSA) are cleaved as a signal peptide. Residue Asn-81 is glycosylated (N-linked (GlcNAc...) asparagine). A disulfide bridge connects residues Cys-89 and Cys-106. Ser-214 serves as the catalytic Acyl-ester intermediate. A disulfide bridge links Cys-266 with Cys-277. N-linked (GlcNAc...) asparagine glycosylation is present at Asn-269. Glu-339 functions as the Charge relay system in the catalytic mechanism. Residues Asn-371, Asn-404, and Asn-443 are each glycosylated (N-linked (GlcNAc...) asparagine). His-463 serves as the catalytic Charge relay system.

It belongs to the type-B carboxylesterase/lipase family.

It carries out the reaction a carboxylic ester + H2O = an alcohol + a carboxylate + H(+). Overproduction of nonspecific esterases is a common mechanism of resistance to organophosphate insecticides. The chain is Esterase E4 from Myzus persicae (Green peach aphid).